We begin with the raw amino-acid sequence, 904 residues long: Transcription factor E2F7 (904 aa).

A disordered region spans residues 61–80 (TPDRNPITPVKPVDRQPQVE). At S96 the chain carries Phosphoserine. Residues 143-212 (RKQKSLGLLC…VAKNQYGWHG (70 aa)) mediate DNA binding. Over residues 252 to 269 (GERRKDGSPDPRDPHLLD) the composition is skewed to basic and acidic residues. The disordered stretch occupies residues 252–283 (GERRKDGSPDPRDPHLLDFSEADYPSSSANSR). The DNA-binding element occupies 283–368 (RKDKSLRIMS…GRKPAFKWIG (86 aa)). At S411 the chain carries Phosphoserine. The tract at residues 560-628 (LSPESRSEED…VMPKKPSSST (69 aa)) is disordered. The residue at position 833 (S833) is a Phosphoserine. The interval 846–904 (AEQSPAPATPKSIQRRHRETFFKTPGSLGDPVFRRKERNQSRNTSSAQRRLEISSSGPD) is disordered. Residues 886–904 (SRNTSSAQRRLEISSSGPD) show a composition bias toward polar residues.

Belongs to the E2F/DP family. Interacts with HIF1A. Homodimer and heterodimer: mainly forms homodimers and, to a lesser extent, heterodimers with E2F8. Dimerization is important for DNA-binding. Interacts with MN1. As to expression, widely expressed with highest levels in skin and thymus and very low levels in brain, muscle and stomach. Expressed in trophoblast giant cells throughout placenta development (at protein level).

The protein localises to the nucleus. Its function is as follows. Atypical E2F transcription factor that participates in various processes such as angiogenesis, polyploidization of specialized cells and DNA damage response. Mainly acts as a transcription repressor that binds DNA independently of DP proteins and specifically recognizes the E2 recognition site 5'-TTTC[CG]CGC-3'. Directly represses transcription of classical E2F transcription factors such as E2F1. Acts as a regulator of S-phase by recognizing and binding the E2-related site 5'-TTCCCGCC-3' and mediating repression of G1/S-regulated genes. Plays a key role in polyploidization of cells in placenta and liver by regulating the endocycle, probably by repressing genes promoting cytokinesis and antagonizing action of classical E2F proteins (E2F1, E2F2 and/or E2F3). Required for placental development by promoting polyploidization of trophoblast giant cells. Also involved in DNA damage response: up-regulated by p53/TP53 following genotoxic stress and acts as a downstream effector of p53/TP53-dependent repression by mediating repression of indirect p53/TP53 target genes involved in DNA replication. Acts as a promoter of sprouting angiogenesis, possibly by acting as a transcription activator: associates with HIF1A, recognizes and binds the VEGFA promoter, which is different from canonical E2 recognition site, and activates expression of the VEGFA gene. Acts as a negative regulator of keratinocyte differentiation. The polypeptide is Transcription factor E2F7 (E2f7) (Mus musculus (Mouse)).